The primary structure comprises 320 residues: Cytosolic Fe-S cluster assembly factor NUBP1 (320 aa).

Met1 is subject to N-acetylmethionine. Residues Cys8, Cys22, Cys25, and Cys31 each contribute to the [4Fe-4S] cluster site. 62-69 (GKGGVGKS) is a binding site for ATP. The [4Fe-4S] cluster site is built by Cys235 and Cys238. At Ser319 the chain carries Phosphoserine.

It belongs to the Mrp/NBP35 ATP-binding proteins family. NUBP1/NBP35 subfamily. As to quaternary structure, heterotetramer of 2 NUBP1 and 2 NUBP2 chains. Interacts with KIFC1. Interacts with NUBP2. Interacts with the BBS/CCT complex subunit CCT1. The cofactor is [4Fe-4S] cluster.

The protein localises to the cytoplasm. The protein resides in the nucleus. It localises to the cell projection. Its subcellular location is the cytoskeleton. It is found in the cilium axoneme. The protein localises to the cilium basal body. The protein resides in the microtubule organizing center. It localises to the centrosome. Its subcellular location is the centriole. Component of the cytosolic iron-sulfur (Fe/S) protein assembly (CIA) machinery. Required for maturation of extramitochondrial Fe-S proteins. The NUBP1-NUBP2 heterotetramer forms a Fe-S scaffold complex, mediating the de novo assembly of an Fe-S cluster and its transfer to target apoproteins. Implicated in the regulation of centrosome duplication. Negatively regulates cilium formation and structure. The protein is Cytosolic Fe-S cluster assembly factor NUBP1 of Homo sapiens (Human).